The chain runs to 564 residues: Ferric reductase transmembrane component 1 (564 aa).

An N-linked (GlcNAc...) asparagine glycan is attached at Asn4. The next 2 membrane-spanning stretches (helical) occupy residues 10–30 and 73–93; these read TVIA…MFWL and VILT…FIGM. An N-linked (GlcNAc...) asparagine glycan is attached at Asn111. The chain crosses the membrane as a helical span at residues 117–137; it reads VAARLGFLACGLYVTSYFFSI. The region spanning 121 to 254 is the Ferric oxidoreductase domain; the sequence is LGFLACGLYV…VYMKVCVAVY (134 aa). The heme site is built by His157 and His171. Transmembrane regions (helical) follow at residues 160-180 and 193-213; these read LSQY…GLAA and IIGY…LPFF. Heme-binding residues include His225 and His239. Residues 255–410 form the FAD-binding FR-type domain; the sequence is VFDRGCRMLR…DGPYGPVSNP (156 aa). The N-linked (GlcNAc...) asparagine glycan is linked to Asn268. 317–323 is a binding site for FAD; that stretch reads HPFTIAS. Residue Asn360 is glycosylated (N-linked (GlcNAc...) asparagine). 3 positions are modified to phosphoserine: Ser362, Ser381, and Ser383. Residues 417–437 traverse the membrane as a helical segment; sequence LFLFAGGVGVSYILPIILDTI. 419 to 427 lines the NAD(+) pocket; sequence LFAGGVGVS. N-linked (GlcNAc...) asparagine glycosylation is present at Asn501.

This sequence belongs to the ferric reductase (FRE) family. FAD is required as a cofactor. The cofactor is heme.

It localises to the cell membrane. It carries out the reaction 2 a Fe(II)-siderophore + NADP(+) + H(+) = 2 a Fe(III)-siderophore + NADPH. Metalloreductase responsible for reducing extracellular iron and copper prior to import. Catalyzes the reductive uptake of Fe(3+)-salts and Fe(3+) bound to catecholate or hydroxamate siderophores. Fe(3+) is reduced to Fe(2+), which then dissociates from the siderophore and can be imported by the high-affinity Fe(2+) transport complex in the plasma membrane. Also participates in Cu(2+) reduction and Cu(+) uptake. The protein is Ferric reductase transmembrane component 1 (frp1) of Schizosaccharomyces pombe (strain 972 / ATCC 24843) (Fission yeast).